We begin with the raw amino-acid sequence, 89 residues long: UPF0213 protein LMOf2365_0181 (89 aa).

Residues 5–80 enclose the GIY-YIG domain; the sequence is SEHFFYVLKC…KKLSRKNKDA (76 aa).

This sequence belongs to the UPF0213 family.

The polypeptide is UPF0213 protein LMOf2365_0181 (Listeria monocytogenes serotype 4b (strain F2365)).